The chain runs to 694 residues: Probable methyltransferase PMT11 (694 aa).

Residues 1-14 (MKPLTNGDLFKSPT) lie on the Cytoplasmic side of the membrane. The chain crosses the membrane as a helical; Signal-anchor for type II membrane protein span at residues 15–32 (LIKISALVFVTVAFFYLG). The Lumenal portion of the chain corresponds to 33 to 694 (KHWSDDGYQQ…LTCEKRLLRA (662 aa)). Residues asparagine 69 and asparagine 77 are each glycosylated (N-linked (GlcNAc...) asparagine). A disordered region spans residues 83–128 (IPATIRQQPPSVVADTEKVKVEANPPPPPPPSPSPPPPPGPVKSFG). Pro residues predominate over residues 106–123 (NPPPPPPPSPSPPPPPGP). Asparagine 155, asparagine 378, and asparagine 423 each carry an N-linked (GlcNAc...) asparagine glycan.

This sequence belongs to the methyltransferase superfamily.

It is found in the golgi apparatus membrane. The protein is Probable methyltransferase PMT11 of Arabidopsis thaliana (Mouse-ear cress).